We begin with the raw amino-acid sequence, 255 residues long: Cytochrome b561 and DOMON domain-containing protein At5g48750 (255 aa).

The N-terminal stretch at 1 to 27 (MFLSSRTIFVGLCFLFVLAPCFTRATT) is a signal peptide. Residues 54–169 (LDSFLHYSYV…TVVNHLWQDG (116 aa)) enclose the DOMON domain. The Cytochrome b561 domain occupies 176-255 (RLGMHAMSGN…DPTWFYILIL (80 aa)). A helical membrane pass occupies residues 216–236 (IHGLVNAVCWGIFIPIGVMAA).

It localises to the membrane. The chain is Cytochrome b561 and DOMON domain-containing protein At5g48750 from Arabidopsis thaliana (Mouse-ear cress).